A 427-amino-acid polypeptide reads, in one-letter code: MADTKAKLTLNGDTAVELDVLKGTLGQDVIDIRTLGSKGVFTFDPGFTSTASCESKITFIDGDEGILLHRGFPIDQLATDSNYLEVCYILLNGEKPTQEQYDEFKTTVTRHTMIHEQITRLFHAFRRDSHPMAVMCGITGALAAFYHDSLDVNNPRHREIAAFRLLSKMPTMAAMCYKYSIGQPFVYPRNDLSYAGNFLNMMFSTPCEPYEVNPILERAMDRILILHADHEQNASTSTVRTAGSSGANPFACIAAGIASLWGPAHGGANEAALKMLEEISSVKHIPEFVRRAKDKNDSFRLMGFGHRVYKNYDPRATVMRETCHEVLKELGTKDDLLEVAMELENIALNDPYFIEKKLYPNVDFYSGIILKAMGIPSSMFTVIFAMARTVGWIAHWSEMHSDGMKIARPRQLYTGYEKRDFKSDIKR.

Lys283 is subject to N6-acetyllysine. Residues His306 and Asp363 contribute to the active site.

Belongs to the citrate synthase family. In terms of assembly, homohexamer.

The enzyme catalyses oxaloacetate + acetyl-CoA + H2O = citrate + CoA + H(+). Its pathway is carbohydrate metabolism; tricarboxylic acid cycle; isocitrate from oxaloacetate: step 1/2. The polypeptide is Citrate synthase (gltA) (Escherichia coli O6:H1 (strain CFT073 / ATCC 700928 / UPEC)).